The primary structure comprises 492 residues: Catalase isozyme 1 (492 aa).

Catalysis depends on residues histidine 65 and asparagine 138. Position 348 (tyrosine 348) interacts with heme.

This sequence belongs to the catalase family. Homotetramer. Heme serves as cofactor.

Its subcellular location is the peroxisome. The protein resides in the glyoxysome. The catalysed reaction is 2 H2O2 = O2 + 2 H2O. In terms of biological role, occurs in almost all aerobically respiring organisms and serves to protect cells from the toxic effects of hydrogen peroxide. In Solanum tuberosum (Potato), this protein is Catalase isozyme 1 (CAT1).